A 2380-amino-acid chain; its full sequence is Probable polyketide synthase 25 (2380 aa).

Over residues 1 to 18 the composition is skewed to polar residues; sequence MDNSYLNNPQFDINNGNK. The disordered stretch occupies residues 1-29; that stretch reads MDNSYLNNPQFDINNGNKEVTDDDNNKNN. The Ketosynthase family 3 (KS3) domain maps to 31–457; sequence DNLVAIVGVG…GSNCCLVLSQ (427 aa). Active-site for beta-ketoacyl synthase activity residues include Cys-198, His-340, and His-380. The segment at 649-682 is acyl/malonyl transferase; that stretch reads GIKASFMLGHSLGEVTTAYCSGMIDIDQLCYLIY. Catalysis depends on Ser-659, which acts as the For acyl/malonyl transferase activity. Positions 948–1070 are N-terminal hotdog fold; that stretch reads ISILGNSMQD…ANFQLYNNGK (123 aa). The PKS/mFAS DH domain maps to 948 to 1234; sequence ISILGNSMQD…CTSLTPVKDP (287 aa). His-982 (proton acceptor; for dehydratase activity) is an active-site residue. A C-terminal hotdog fold region spans residues 1085–1234; that stretch reads NLSSIPWDKF…CTSLTPVKDP (150 aa). Asp-1148 (proton donor; for dehydratase activity) is an active-site residue. Residues 2299–2376 enclose the Carrier domain; it reads KNSTNIKDKF…MVCQIINDNF (78 aa). Ser-2336 bears the O-(pantetheine 4'-phosphoryl)serine mark.

Requires pantetheine 4'-phosphate as cofactor.

Its function is as follows. Probable polyketide synthase. This chain is Probable polyketide synthase 25 (pks25), found in Dictyostelium discoideum (Social amoeba).